A 79-amino-acid chain; its full sequence is Conotoxin 8 (79 aa).

The N-terminal stretch at 1–22 is a signal peptide; it reads MKLTCVLIITVLFLTASQLITA. The propeptide occupies 23–47; it reads DYSRGQRQYRAVRLGDEMRNFKGAR. 3 cysteine pairs are disulfide-bonded: C49-C62, C56-C67, and C61-C77.

It belongs to the conotoxin O1 superfamily. In terms of tissue distribution, expressed by the venom duct.

It is found in the secreted. This Conus vexillum (Flag cone) protein is Conotoxin 8.